A 288-amino-acid chain; its full sequence is Probable ketoamine kinase VP1481 (288 aa).

Residue 92–94 participates in ATP binding; that stretch reads NYL. D195 functions as the Proton acceptor in the catalytic mechanism.

The protein belongs to the fructosamine kinase family.

In terms of biological role, ketoamine kinase that phosphorylates ketoamines on the third carbon of the sugar moiety to generate ketoamine 3-phosphate. The chain is Probable ketoamine kinase VP1481 from Vibrio parahaemolyticus serotype O3:K6 (strain RIMD 2210633).